A 77-amino-acid polypeptide reads, in one-letter code: Large ribosomal subunit protein bL28 (77 aa).

The disordered stretch occupies residues 1–20 (MSRVCQVTGKGPVTGNNISH).

The protein belongs to the bacterial ribosomal protein bL28 family.

The chain is Large ribosomal subunit protein bL28 from Pseudomonas syringae pv. tomato (strain ATCC BAA-871 / DC3000).